We begin with the raw amino-acid sequence, 477 residues long: Homeobox protein Meis2 (477 aa).

The interval 71-191 is required for interaction with PBX1; the sequence is DALKRDKDAI…KMPIDLVIDE (121 aa). Residues 110-193 form the MEIS N-terminal domain; it reads GGDVCSSDSF…PIDLVIDERD (84 aa). Residues 193–203 show a composition bias toward basic and acidic residues; sequence DGSSKSDHEEL. The segment at 193-283 is disordered; it reads DGSSKSDHEE…KKRQKKRGIF (91 aa). 2 stretches are compositionally biased toward polar residues: residues 204–217 and 239–251; these read SGSS…NPSS and GHAS…SSEQ. A DNA-binding region (homeobox; TALE-type) is located at residues 276–338; that stretch reads RQKKRGIFPK…NARRRIVQPM (63 aa). Residues 299-333 are interaction with DNA; sequence LTHPYPSEEQKKQLAQDTGLTILQVNNWFINARRR. The interval 340–477 is transcriptional activation domain; the sequence is DQSNRAGFLL…GGQVMDIHAQ (138 aa).

It belongs to the TALE/MEIS homeobox family. Monomer and homodimer. Heterodimer with HOXB13. Isoform 2 interacts with TLX1. Isoform 3 interacts with HOXA13 and PBX1 isoform PBX1b. Isoform 4 interacts with SP1, SP3 and KLF4. Isoform 4 and isoform 5 interact with PBX1 isoform PBX1a; the interaction partially relieves MEIS2 autoinhibition. Isoform 3 also known as MEIS2b is part of a PDX1:PBX1b:Meis2B complex; Meis2B is recruited by PBX1b and can be replaced by isoform 4 in a small fraction of complexes. Can form trimeric complexes including HOXB8 and PBX2 or PBX3. As to expression, expressed in various tissues. Expressed at high level in the lymphoid organs of hematopoietic tissues. Also expressed in some regions of the brain, such as the putamen.

The protein localises to the nucleus. The protein resides in the cytoplasm. Its subcellular location is the perinuclear region. Involved in transcriptional regulation. Binds to HOX or PBX proteins to form dimers, or to a DNA-bound dimer of PBX and HOX proteins and thought to have a role in stabilization of the homeoprotein-DNA complex. Isoform 3 is required for the activity of a PDX1:PBX1b:MEIS2b complex in pancreatic acinar cells involved in the transcriptional activation of the ELA1 enhancer; the complex binds to the enhancer B element and cooperates with the transcription factor 1 complex (PTF1) bound to the enhancer A element; MEIS2 is not involved in complex DNA-binding. Probably in complex with PBX1, is involved in transcriptional regulation by KLF4. Isoform 3 and isoform 4 can bind to a EPHA8 promoter sequence containing the DNA motif 5'-CGGTCA-3'; in cooperation with a PBX protein (such as PBX2) is proposed to be involved in the transcriptional activation of EPHA8 in the developing midbrain. May be involved in regulation of myeloid differentiation. Can bind to the DNA sequence 5'-TGACAG-3'in the activator ACT sequence of the D(1A) dopamine receptor (DRD1) promoter and activate DRD1 transcription; isoform 5 cannot activate DRD1 transcription. The protein is Homeobox protein Meis2 (MEIS2) of Homo sapiens (Human).